The primary structure comprises 227 residues: Phosphoribosylformylglycinamidine synthase subunit PurQ (227 aa).

The Glutamine amidotransferase type-1 domain maps to 3–225 (FAVIVFPGSN…LKYWRETYVV (223 aa)). Cys-86 functions as the Nucleophile in the catalytic mechanism. Active-site residues include His-194 and Glu-196.

As to quaternary structure, part of the FGAM synthase complex composed of 1 PurL, 1 PurQ and 2 PurS subunits.

The protein localises to the cytoplasm. It catalyses the reaction N(2)-formyl-N(1)-(5-phospho-beta-D-ribosyl)glycinamide + L-glutamine + ATP + H2O = 2-formamido-N(1)-(5-O-phospho-beta-D-ribosyl)acetamidine + L-glutamate + ADP + phosphate + H(+). It carries out the reaction L-glutamine + H2O = L-glutamate + NH4(+). The protein operates within purine metabolism; IMP biosynthesis via de novo pathway; 5-amino-1-(5-phospho-D-ribosyl)imidazole from N(2)-formyl-N(1)-(5-phospho-D-ribosyl)glycinamide: step 1/2. Its function is as follows. Part of the phosphoribosylformylglycinamidine synthase complex involved in the purines biosynthetic pathway. Catalyzes the ATP-dependent conversion of formylglycinamide ribonucleotide (FGAR) and glutamine to yield formylglycinamidine ribonucleotide (FGAM) and glutamate. The FGAM synthase complex is composed of three subunits. PurQ produces an ammonia molecule by converting glutamine to glutamate. PurL transfers the ammonia molecule to FGAR to form FGAM in an ATP-dependent manner. PurS interacts with PurQ and PurL and is thought to assist in the transfer of the ammonia molecule from PurQ to PurL. In Bacillus cytotoxicus (strain DSM 22905 / CIP 110041 / 391-98 / NVH 391-98), this protein is Phosphoribosylformylglycinamidine synthase subunit PurQ.